We begin with the raw amino-acid sequence, 525 residues long: G patch domain-containing protein 3 (525 aa).

2 disordered regions span residues E54–D85 and E246–T317. Positions D274–E299 are enriched in acidic residues. Basic and acidic residues predominate over residues E300 to T317. The 49-residue stretch at T411–E459 folds into the G-patch domain.

In terms of assembly, interacts with mitochondrial MAVS; the interaction is markedly increased upon viral infection.

It localises to the nucleus. It is found in the cytoplasm. In terms of biological role, involved in transcriptional regulation. It is able to activate transcription from CXCR4 promoter and therefore it might control neural crest cell migration involved in ocular and craniofacial development. Is a negative regulator of immune antiviral response, acting via down-regulation of RIG-I-like receptors signaling and inhibition of type I interferon production. The control mechanism involves interaction with mitochondrial MAVS and inhibition of MAVS assembly with downstream proteins implicated in antiviral response, such as TBK1 and TRAF6. The chain is G patch domain-containing protein 3 (Gpatch3) from Mus musculus (Mouse).